We begin with the raw amino-acid sequence, 307 residues long: 4-diphosphocytidyl-2-C-methyl-D-erythritol kinase (307 aa).

The active site involves Lys-9. 94–104 lines the ATP pocket; the sequence is PIGAGLAGGSS. Residue Asp-136 is part of the active site.

Belongs to the GHMP kinase family. IspE subfamily.

It catalyses the reaction 4-CDP-2-C-methyl-D-erythritol + ATP = 4-CDP-2-C-methyl-D-erythritol 2-phosphate + ADP + H(+). The protein operates within isoprenoid biosynthesis; isopentenyl diphosphate biosynthesis via DXP pathway; isopentenyl diphosphate from 1-deoxy-D-xylulose 5-phosphate: step 3/6. Catalyzes the phosphorylation of the position 2 hydroxy group of 4-diphosphocytidyl-2C-methyl-D-erythritol. In Synechococcus sp. (strain CC9605), this protein is 4-diphosphocytidyl-2-C-methyl-D-erythritol kinase.